The sequence spans 547 residues: Threonine synthase (547 aa).

Lys-117 bears the N6-(pyridoxal phosphate)lysine mark. Residues Gly-272, Asn-273, Phe-274, Asp-276, and Thr-471 each contribute to the pyridoxal 5'-phosphate site.

Belongs to the threonine synthase family. It depends on pyridoxal 5'-phosphate as a cofactor.

The catalysed reaction is O-phospho-L-homoserine + H2O = L-threonine + phosphate. The protein operates within amino-acid biosynthesis; L-threonine biosynthesis; L-threonine from L-aspartate: step 5/5. Functionally, catalyzes the gamma-elimination of phosphate from L-phosphohomoserine and the beta-addition of water to produce L-threonine. This Cryptococcus neoformans var. grubii serotype A (strain H99 / ATCC 208821 / CBS 10515 / FGSC 9487) (Filobasidiella neoformans var. grubii) protein is Threonine synthase.